We begin with the raw amino-acid sequence, 298 residues long: Glutamyl-Q tRNA(Asp) synthetase (298 aa).

Residues R8–S12 and E44 each bind L-glutamate. A 'HIGH' region motif is present at residues P11–S21. 4 residues coordinate Zn(2+): C100, C102, Y123, and C127. 2 residues coordinate L-glutamate: Y183 and R201. A 'KMSKS' region motif is present at residues K239–Q243. An ATP-binding site is contributed by K242.

This sequence belongs to the class-I aminoacyl-tRNA synthetase family. GluQ subfamily. Zn(2+) is required as a cofactor.

Its function is as follows. Catalyzes the tRNA-independent activation of glutamate in presence of ATP and the subsequent transfer of glutamate onto a tRNA(Asp). Glutamate is transferred on the 2-amino-5-(4,5-dihydroxy-2-cyclopenten-1-yl) moiety of the queuosine in the wobble position of the QUC anticodon. The polypeptide is Glutamyl-Q tRNA(Asp) synthetase (Burkholderia orbicola (strain MC0-3)).